Consider the following 326-residue polypeptide: Pyruvate dehydrogenase E1 component subunit beta (326 aa).

A thiamine diphosphate-binding site is contributed by glutamate 60. Isoleucine 113, alanine 161, isoleucine 162, and asparagine 166 together coordinate K(+).

Heterodimer of an alpha and a beta chain. Requires thiamine diphosphate as cofactor.

The protein localises to the plastid. Its subcellular location is the chloroplast. It catalyses the reaction N(6)-[(R)-lipoyl]-L-lysyl-[protein] + pyruvate + H(+) = N(6)-[(R)-S(8)-acetyldihydrolipoyl]-L-lysyl-[protein] + CO2. Functionally, the pyruvate dehydrogenase complex catalyzes the overall conversion of pyruvate to acetyl-CoA and CO(2). It contains multiple copies of three enzymatic components: pyruvate dehydrogenase (E1), dihydrolipoamide acetyltransferase (E2) and lipoamide dehydrogenase (E3). In Chaetosphaeridium globosum (Charophycean green alga), this protein is Pyruvate dehydrogenase E1 component subunit beta (pdhB).